A 572-amino-acid chain; its full sequence is Proline--tRNA ligase (572 aa).

Belongs to the class-II aminoacyl-tRNA synthetase family. ProS type 1 subfamily. As to quaternary structure, homodimer.

It localises to the cytoplasm. The enzyme catalyses tRNA(Pro) + L-proline + ATP = L-prolyl-tRNA(Pro) + AMP + diphosphate. Functionally, catalyzes the attachment of proline to tRNA(Pro) in a two-step reaction: proline is first activated by ATP to form Pro-AMP and then transferred to the acceptor end of tRNA(Pro). As ProRS can inadvertently accommodate and process non-cognate amino acids such as alanine and cysteine, to avoid such errors it has two additional distinct editing activities against alanine. One activity is designated as 'pretransfer' editing and involves the tRNA(Pro)-independent hydrolysis of activated Ala-AMP. The other activity is designated 'posttransfer' editing and involves deacylation of mischarged Ala-tRNA(Pro). The misacylated Cys-tRNA(Pro) is not edited by ProRS. The chain is Proline--tRNA ligase from Klebsiella pneumoniae subsp. pneumoniae (strain ATCC 700721 / MGH 78578).